A 244-amino-acid polypeptide reads, in one-letter code: Inactive chemokine-binding protein (244 aa).

Residues 1 to 79 (MHVPASLQQS…STSVEDVDPP (79 aa)) form a disordered region. Positions 37 to 53 (QDQTPTNDKICQSVTEI) are enriched in polar residues. Acidic residues predominate over residues 54 to 77 (TESESDPDPEVESEDDSTSVEDVD).

It belongs to the orthopoxvirus OPG001 family.

Its subcellular location is the host cytoplasm. Functionally, the protein is truncated in this vaccinal strain and presumably inactive, because the lack of signal peptide prevents the protein of being secreted. In the other strains inhibits host immune defense by binding to host chemokines. Binds host CC chemokines (beta chemokines) such as RANTES with high affinity, but not CXC or C chemokines (alpha and gamma chemokines). The sequence is that of Inactive chemokine-binding protein (OPG001) from Vaccinia virus (strain Copenhagen) (VACV).